Reading from the N-terminus, the 372-residue chain is MKTRLALPCLLGSLLLSSAVHAASALVPPKGYYAALEIRKGEAQACQAVPEPYTGELVFRSKYEGSDSARSTLNKKAEKAFRAKTKPITEIERGVSRMVMRYMEKGRLRRAGMRPGLLDAWAEDDALLSTEYNHTGKSMRKWALGSLAGAYLRLKFSTSQPLAAYPEQAKRIEAWFAKVGDQVIKDWSDLPLKQINNHSYWAAWSVMAAGVATNRRPLFDWAVEQFHIAAKQVDPRGFLANELKRRQRALAYHNYSLPPLMMIAAFAQANGVDLRGDNDGALGRLAGNVLAGVEDPEPFAERAGEDQDMEDLETDAKFSWLEPYCALYACSPALRERKAEMGPFKNFRLGGDVTRIFDPQEKPSKSTVGNAD.

Positions 1 to 22 (MKTRLALPCLLGSLLLSSAVHA) are cleaved as a signal peptide. Residues 61–62 (SK), 134–135 (HT), and tyrosine 252 contribute to the substrate site.

The protein belongs to the polysaccharide lyase 5 family.

Its subcellular location is the periplasm. The catalysed reaction is Eliminative cleavage of alginate to give oligosaccharides with 4-deoxy-alpha-L-erythro-hex-4-enuronosyl groups at their non-reducing ends and beta-D-mannuronate at their reducing end.. Monovalent cations such as potassium and sodium enhance activity, as well as a combined action of these cations with magnesium. However, other cations like calcium, cobalt, manganese and zinc, or the presence of EDTA, do not affect the enzymatic activity. In terms of biological role, catalyzes the depolymerization of alginate by cleaving the beta-1,4 glycosidic bond between two adjacent sugar residues via a beta-elimination mechanism. Degrades deacetylated polymannuronate alginate more efficiently than non-deacetylated polyM. Is able to degrade its own alginate, but at a lower efficiency than that produced from M.pyriferia and P.aeruginosa. May serve to degrade mislocalized alginate that is trapped in the periplasmic space. The chain is Alginate lyase from Azotobacter chroococcum mcd 1.